Reading from the N-terminus, the 557-residue chain is Formate--tetrahydrofolate ligase 2 (557 aa).

Residue 66–73 (TPAGEGKT) participates in ATP binding.

Belongs to the formate--tetrahydrofolate ligase family.

The enzyme catalyses (6S)-5,6,7,8-tetrahydrofolate + formate + ATP = (6R)-10-formyltetrahydrofolate + ADP + phosphate. It functions in the pathway one-carbon metabolism; tetrahydrofolate interconversion. This is Formate--tetrahydrofolate ligase 2 from Streptococcus pyogenes serotype M1.